A 1775-amino-acid polypeptide reads, in one-letter code: ATP-dependent RNA helicase DEAH12, chloroplastic (1775 aa).

The transit peptide at 1-33 (MRNSFPPSDGGRSATDRRQQSSHSSSTNRYNSR) directs the protein to the chloroplast. A disordered region spans residues 1–77 (MRNSFPPSDG…NPSSGYSPPV (77 aa)). The span at 21–34 (SSHSSSTNRYNSRS) shows a compositional bias: low complexity. Over residues 35 to 60 (AQSSPPLNHRPTWNQQHSQYPNSNFP) the composition is skewed to polar residues. The 165-residue stretch at 316-480 (LKKIHREQIM…FFSCGILLVN (165 aa)) folds into the Helicase ATP-binding domain. 329–336 (GETGSGKS) is an ATP binding site. The DEAH box signature appears at 427 to 430 (DEAH). The Helicase C-terminal domain maps to 510 to 676 (DVVKMAVEIH…VALLRMLALG (167 aa)). The tract at residues 1560 to 1767 (IEVECPICLS…EPCYAHLRTI (208 aa)) is TRIAD supradomain. Zn(2+) is bound by residues Cys1564, Cys1567, Cys1580, His1582, Cys1585, Cys1588, Cys1607, Cys1612, Cys1652, Cys1657, Cys1675, Cys1678, Cys1683, Cys1686, His1691, Cys1696, Cys1722, and Cys1725. The RING-type 1 zinc-finger motif lies at 1564–1612 (CPICLSEVDDGYSLEGCSHLFCKACLLEQFEASMRNFDAFPILCSHIDC). The IBR-type zinc-finger motif lies at 1631–1696 (DELFSASLSS…HLEYHPLITC (66 aa)). The segment at 1722–1750 (CPICKSTIEKTDGCNHMKCRCGKHICWTC) adopts an RING-type 2; atypical zinc-finger fold. Cys1735 is an active-site residue. The Zn(2+) site is built by Cys1740 and Cys1742.

The protein belongs to the DEAD box helicase family. DEAH subfamily.

It localises to the plastid. Its subcellular location is the chloroplast. It catalyses the reaction ATP + H2O = ADP + phosphate + H(+). This chain is ATP-dependent RNA helicase DEAH12, chloroplastic, found in Arabidopsis thaliana (Mouse-ear cress).